Reading from the N-terminus, the 570-residue chain is uncharacterized protein (570 aa).

The span at 1 to 15 (MTESIISSRTASISS) shows a compositional bias: low complexity. The segment at 1–34 (MTESIISSRTASISSKEGYEIRQGSTDSSSLDLE) is disordered. Ser14 is modified (phosphoserine). 12 helical membrane passes run 96–116 (WKLYIYLLLMLGFLDMMLFIG), 141–161 (NLNTLFYVGYIVGQFPGHYIM), 163–183 (TFPLGKFVGLVTFSWSVIVFL), 198–218 (FFLGFTESCLLPAMEATMGMF), 229–249 (PVFWISCLSCGIPAGFIAYGL), 261–281 (LFMIITGGITFFLSIFLFFYY), 328–348 (PITWLFTFAAFTLMLSNNLAY), 369–389 (VALAGYNTVSAIIATFAMYLI), 397–417 (AMFWMLPSITGGIAFVALPWS), 423–443 (LATMIIASDFGITYIIALGWT), 457–477 (GLMFMVGYAIANIISPQLWQS), and 485–505 (PAWIVQIVVAWFVTPIIYLVA).

It belongs to the major facilitator superfamily. Allantoate permease family.

Its subcellular location is the endoplasmic reticulum. It localises to the membrane. This is an uncharacterized protein from Schizosaccharomyces pombe (strain 972 / ATCC 24843) (Fission yeast).